Consider the following 1031-residue polypeptide: Sister chromatid cohesion 1 protein 4 (1031 aa).

Residues T461–G481 are disordered. Positions T545–P552 match the Nuclear localization signal motif. Disordered regions lie at residues V661 to K703, E742 to N772, and E803 to T835. 2 stretches are compositionally biased toward basic and acidic residues: residues E742–E762 and E803–Q825.

Belongs to the rad21 family. Component of the cohesin complex. As to expression, expressed in tissues containing dividing cells such as seedlings, flower buds, flowers and inflorescence meristem tissue.

The protein resides in the nucleus. Its subcellular location is the chromosome. It localises to the centromere. Its function is as follows. Involved in sister chromatid and centromere cohesion during mitosis. The sequence is that of Sister chromatid cohesion 1 protein 4 (SYN4) from Arabidopsis thaliana (Mouse-ear cress).